The sequence spans 216 residues: Noggin-1 (216 aa).

The first 18 residues, 1–18, serve as a signal peptide directing secretion; that stretch reads MDFPRFLLSAYLLLLSFA. Residue Asn55 is glycosylated (N-linked (GlcNAc...) asparagine).

Belongs to the noggin family. As to quaternary structure, homodimer; disulfide-linked.

The protein localises to the secreted. Inhibitor of bone morphogenetic proteins (BMP) signaling. May play an important role in the dorsoventral patterning of the embryo. The polypeptide is Noggin-1 (nog1) (Danio rerio (Zebrafish)).